We begin with the raw amino-acid sequence, 1086 residues long: Tudor domain-containing protein 7 (1086 aa).

HTH OST-type domains follow at residues 3–76 (EADL…YAVA) and 222–291 (KMDE…YPAR). Basic and acidic residues predominate over residues 295–306 (PLKSDQDPEKEL). The tract at residues 295–324 (PLKSDQDPEKELPPPPPAPKQEVPSQGSPA) is disordered. An HTH OST-type 3 domain is found at 325 to 394 (VMPDVKEKVA…TQKAILYAKL (70 aa)). Tudor domains lie at 501–558 (TVHV…FCSL) and 691–748 (LPFC…FLQE). The tract at residues 844 to 866 (AASSPGNRNGGTPAPGSPAESLR) is disordered. At S847 the chain carries Phosphoserine. The segment at 849–1086 (GNRNGGTPAP…QYLLELSKVN (238 aa)) is interaction with CDK17. The interval 881–1086 (TSSFSLEELP…QYLLELSKVN (206 aa)) is interaction with CABLES1.

This sequence belongs to the TDRD7 family. As to quaternary structure, found in a mRNP complex, at least composed of TDRD1, TDRD6, TDRD7 and DDX4. Found in a complex containing CABLES1, CDK16 and CDK17. Interacts with CABLES1, CDK17 and PIWIL1. In terms of tissue distribution, mainly expressed in testis. Expressed in spermatogonia, spermatocytes and round spermatids (at protein level). Also expressed in the developing lens.

It is found in the cytoplasm. In terms of biological role, component of specific cytoplasmic RNA granules involved in post-transcriptional regulation of specific genes: probably acts by binding to specific mRNAs and regulating their translation. Required for lens transparency during lens development, by regulating translation of genes such as CRYBB3 and HSPB1 in the developing lens. Also required during spermatogenesis. The sequence is that of Tudor domain-containing protein 7 (Tdrd7) from Mus musculus (Mouse).